Reading from the N-terminus, the 970-residue chain is MDAAEPGLPPGPEGRKRYSDIFRSLDNLEISLGNVTLEMLAGDPLLSEDPEPDKTPTATVTNEASCWSGPSPEGPVPLTGEELDLRLIRTKGGVDAALEYAKTWSRYAKELLAWTEKRASYELEFAKSTMKIAEAGKVSIQQQSHMPLQYIYTLFLEHDLSLGTLAMETVAQQKRDYYQPLAAKRTEIEKWRKEFKEQWMKEQKRMNEAVQALRRAQLQYVQRSEDLRARSQGSPEDSAPQASPGPSKQQERRRRSREEAQAKAQEAEALYQACVREANARQQDLEIAKQRIVSHVRKLVFQGDEVLRRVTLSLFGLRGAQAERGPRAFAALAECCAPFEPGQRYQEFVRALRPEAPPPPPPAFSFQEFLPSLNSSPLDIRKKLSGPLPPRLDENSAEPGPWEDPGTGWRWQGTPGPTPGSDVDSVGGGSESRSLDSPTSSPGAGTRQLVKASSTGTESSDDFEERDPDLGDGLENGLGSPFGKWTLSSAAQTHQLRRLRGPAKCRECEAFMVSGTECEECFLTCHKRCLETLLILCGHRRLPARTPLFGVDFLQLPRDFPEEVPFVVTKCTAEIEHRALDVQGIYRVSGSRVRVERLCQAFENGRALVELSGNSPHDVSSVLKRFLQELTEPVIPFHLYDAFISLAKTLHADPGDDPGTPSPSPEVIRSLKTLLVQLPDSNYNTLRHLVAHLFRVAARFMENKMSANNLGIVFGPTLLRPPDGPRAASAIPVTCLLDSGHQAQLVEFLIVHYEQIFGMDELPQATEPPPQDSSPAPGPLTTSSQPPPPHLDPDSQPPVLASDPGPDPQHHSTLEQHPTATPTEIPTPQSDQREDVAEDTKDGGGEVSSQGPEDSLLGTQSRGHFSRQPVKYPRGGVRPVTHQLSSLALVASKLCEETPITSVPRGSLRGRGPSPAAASPEGSPLRRTPLPKHFEITQETARLLSKLDSEAVPRATCCPDVQPEEAEDHL.

A Phosphoserine modification is found at Ser-19. 3 disordered regions span residues 44 to 76 (PLLS…EGPV), 224 to 263 (SEDL…AQAK), and 377 to 478 (PLDI…ENGL). Over residues 56–65 (PTATVTNEAS) the composition is skewed to polar residues. Phosphoserine occurs at positions 71, 231, 234, 243, 437, and 441. The 264-residue stretch at 81–344 (EELDLRLIRT…CCAPFEPGQR (264 aa)) folds into the F-BAR domain. The segment covering 231–246 (SQGSPEDSAPQASPGP) has biased composition (polar residues). A compositionally biased stretch (acidic residues) spans 459–472 (SSDDFEERDPDLGD). A Phorbol-ester/DAG-type zinc finger spans residues 493–537 (THQLRRLRGPAKCRECEAFMVSGTECEECFLTCHKRCLETLLILC). Positions 554–757 (LQLPRDFPEE…FLIVHYEQIF (204 aa)) constitute a Rho-GAP domain. Thr-660 is subject to Phosphothreonine. The disordered stretch occupies residues 762 to 878 (LPQATEPPPQ…PVKYPRGGVR (117 aa)). Residues 766–778 (TEPPPQDSSPAPG) show a composition bias toward pro residues. The segment covering 815–830 (EQHPTATPTEIPTPQS) has biased composition (polar residues). The segment covering 831 to 844 (DQREDVAEDTKDGG) has biased composition (basic and acidic residues). The segment covering 847-863 (VSSQGPEDSLLGTQSRG) has biased composition (polar residues). Phosphoserine occurs at positions 885, 907, 914, 919, and 923. The tract at residues 897-932 (ETPITSVPRGSLRGRGPSPAAASPEGSPLRRTPLPK) is disordered. Residues 910–923 (GRGPSPAAASPEGS) are compositionally biased toward low complexity.

In terms of assembly, interacts with GEM through its N-terminal.

Stimulates, in vitro and in vivo, the GTPase activity of RhoA. The polypeptide is GEM-interacting protein (GMIP) (Homo sapiens (Human)).